We begin with the raw amino-acid sequence, 510 residues long: Cytochrome P450 11B2, mitochondrial (510 aa).

The transit peptide at 1-34 (MGACDNDFIELHSRVTADVWLARPWQCLHRTRAL) directs the protein to the mitochondrion. F391 is a 21-hydroxyprogesterone binding site. Position 457 (C457) interacts with heme.

This sequence belongs to the cytochrome P450 family. Heme serves as cofactor. As to expression, adrenal cortex.

It localises to the mitochondrion inner membrane. The catalysed reaction is a steroid + 2 reduced [adrenodoxin] + O2 + 2 H(+) = an 11beta-hydroxysteroid + 2 oxidized [adrenodoxin] + H2O. It carries out the reaction 21-hydroxyprogesterone + 2 reduced [adrenodoxin] + O2 + 2 H(+) = corticosterone + 2 oxidized [adrenodoxin] + H2O. It catalyses the reaction corticosterone + 2 reduced [adrenodoxin] + O2 + 2 H(+) = 18-hydroxycorticosterone + 2 oxidized [adrenodoxin] + H2O. The enzyme catalyses 18-hydroxycorticosterone + 2 reduced [adrenodoxin] + O2 + 2 H(+) = aldosterone + 2 oxidized [adrenodoxin] + 2 H2O. The catalysed reaction is 11-deoxycortisol + 2 reduced [adrenodoxin] + O2 + 2 H(+) = cortisol + 2 oxidized [adrenodoxin] + H2O. It carries out the reaction cortisol + 2 reduced [adrenodoxin] + O2 + 2 H(+) = 18-hydroxycortisol + 2 oxidized [adrenodoxin] + H2O. It catalyses the reaction 21-hydroxyprogesterone + 2 reduced [adrenodoxin] + O2 + 2 H(+) = 18-hydroxy-11-deoxycorticosterone + 2 oxidized [adrenodoxin] + H2O. The enzyme catalyses 18-hydroxycortisol + 2 reduced [adrenodoxin] + O2 + 2 H(+) = 18-oxocortisol + 2 oxidized [adrenodoxin] + 2 H2O. Its pathway is steroid biosynthesis. A cytochrome P450 monooxygenase that catalyzes the biosynthesis of aldosterone, the main mineralocorticoid responsible for salt and water homeostasis. Catalyzes three sequential oxidative reactions of 11-deoxycorticosterone (21-hydroxyprogesterone), namely 11-beta hydroxylation, followed by two successive oxidations at C18 yielding 18-hydroxy and then 18-oxo intermediates (that do not leave the enzyme active site during the consecutive hydroxylation reactions), and end with the formation of aldosterone. Can also produce 18-hydroxycortisol and 18-oxocortisol, derived from successive oxidations of cortisol at C18, normally found at very low levels, but significantly increased in primary aldosteronism, the most common form of secondary hypertension. Mechanistically, uses molecular oxygen inserting one oxygen atom into a substrate and reducing the second into a water molecule. Two electrons are provided by NADPH via a two-protein mitochondrial transfer system comprising flavoprotein FDXR (adrenodoxin/ferredoxin reductase) and nonheme iron-sulfur protein FDX1 or FDX2 (adrenodoxin/ferredoxin). Could also be involved in the androgen metabolic pathway. The chain is Cytochrome P450 11B2, mitochondrial (Cyp11b2) from Rattus norvegicus (Rat).